The chain runs to 261 residues: Complex I assembly factor TIMMDC1, mitochondrial (261 aa).

Helical transmembrane passes span 67–87 (LNSV…YGGV), 131–151 (WGWR…CMSV), and 183–203 (AGGI…LLLM).

It belongs to the Tim17/Tim22/Tim23 family. As to quaternary structure, associates with complex I assembly intermediates during its biogenesis in a NdufAF3 and NdufAF4 dependent manner.

The protein resides in the membrane. Chaperone protein involved in the assembly of the mitochondrial NADH:ubiquinone oxidoreductase complex (complex I). Essential for viability. The protein is Complex I assembly factor TIMMDC1, mitochondrial of Drosophila melanogaster (Fruit fly).